The sequence spans 696 residues: MAPFPDEVDVFTGPHWRMKQLVGLYCEKLSQTNFSNNNDFRSFLQSLCATFKEFKMHEQIENEYIIGLLQQRSCNVYNVHSDNKLSEMLSLFEKGLRSVKSENEQLNYAQQLKERLEAFTQDFLPHMKEEEEVFQPMLMQYFTYEELKDIKKQVIAQHSSQQRWDCAAEVLKGLSLWSQAEELHKAFKYADHEKTDDELEKELCSTHISQLPTEILLCLFRYLGPEDLCHCGQVCSAWSDLAKTGSLWRHLYPVRWARGDYYRGPPDDVNQEPDEEWVKSLQDEGKAYQEWDEDADVDESDASCEDSLAISAAQREKKLLNGMIQNLLPAVGSSVRSIVLAYSSTVSSKMVRQILSLCPNLTHLDLTQTDVTDSAFDSWSSLWACLSLEHLDLSGCEKLTDRTLKKLSLGLGDLASPTCSEKRSDRRAKLLKSPPSPISLLDKRSLRPTGHSRQVLIFKQWPGKLGSAPCSPTRVWVLDASELADIEDAAEWNRRRGVSTPEVRGFVETQPGGLSCCCRRRRGGFRTGFSTSYWQQQYGLGEAGCGHSTCCTGETALRTLGGLQYESYTTRGSAGAEFRTKCSSGGQLCLECDNRTDPSDGRRSLRFLSLSGCYQVTDLGLRALSQRGGLPLLEHLNLSGCLLITEVGLQELVSACPALNDEHFYYCDNINGPHADTASGCQNLQCGFRVCCRSGE.

The tract at residues 1 to 159 (MAPFPDEVDV…IKKQVIAQHS (159 aa)) is hemerythrin-like. Fe(3+) is bound by residues His15, His57, Glu58, Glu61, His80, His126, and Glu130. Residues 205–251 (STHISQLPTEILLCLFRYLGPEDLCHCGQVCSAWSDLAKTGSLWRHL) form the F-box domain. LRR repeat units follow at residues 343-367 (SSTV…LDLT), 368-395 (QTDV…DLSG), 396-421 (CEKL…TCSE), 582-612 (CSSG…SLSG), 613-640 (CYQV…NLSG), and 641-666 (CLLI…HFYY). [2Fe-2S] cluster-binding residues include Cys667, Cys681, Cys691, and Cys692.

As to quaternary structure, part of a SCF (SKP1-cullin-F-box) protein ligase complex. The cofactor is [2Fe-2S] cluster. In terms of processing, ubiquitinated upon iron and oxygen depletion, leading to its degradation by the proteasome. Ubiquitination is regulated by the hemerythrin-like region that acts as an oxygen and iron sensor.

The protein resides in the cytoplasm. The protein localises to the perinuclear region. Its subcellular location is the nucleus. It participates in protein modification; protein ubiquitination. Its function is as follows. Component of some SCF (SKP1-cullin-F-box) protein ligase complex that plays a central role in iron homeostasis by promoting the ubiquitination and subsequent degradation of ireb2/irp2. Upon high iron and oxygen level, it specifically recognizes and binds ireb2/irp2, promoting its ubiquitination and degradation by the proteasome. In Salmo salar (Atlantic salmon), this protein is F-box/LRR-repeat protein 5 (fbxl5).